Consider the following 271-residue polypeptide: Mannosyl-3-phosphoglycerate phosphatase (271 aa).

Asp-13 acts as the Nucleophile in catalysis. Mg(2+)-binding residues include Asp-13, Asp-15, and Asp-214.

It belongs to the HAD-like hydrolase superfamily. MPGP family. Requires Mg(2+) as cofactor.

The protein resides in the cytoplasm. It catalyses the reaction 2-O-(alpha-D-mannosyl)-3-phosphoglycerate + H2O = (2R)-2-O-(alpha-D-mannosyl)-glycerate + phosphate. This chain is Mannosyl-3-phosphoglycerate phosphatase, found in Escherichia coli O81 (strain ED1a).